The primary structure comprises 108 residues: Small ribosomal subunit protein eS25B (108 aa).

Residues 1–20 show a composition bias toward low complexity; the sequence is MPPKQQLSKAAKAAAALAGG. The tract at residues 1-30 is disordered; that stretch reads MPPKQQLSKAAKAAAALAGGKKSKKKWSKK. N,N-dimethylproline; by NTM1 is present on Pro-2. Positions 21–30 are enriched in basic residues; the sequence is KKSKKKWSKK.

This sequence belongs to the eukaryotic ribosomal protein eS25 family. As to quaternary structure, component of the small ribosomal subunit (SSU). Mature yeast ribosomes consist of a small (40S) and a large (60S) subunit. The 40S small subunit contains 1 molecule of ribosomal RNA (18S rRNA) and 33 different proteins (encoded by 57 genes). The large 60S subunit contains 3 rRNA molecules (25S, 5.8S and 5S rRNA) and 46 different proteins (encoded by 81 genes).

It localises to the cytoplasm. In terms of biological role, component of the ribosome, a large ribonucleoprotein complex responsible for the synthesis of proteins in the cell. The small ribosomal subunit (SSU) binds messenger RNAs (mRNAs) and translates the encoded message by selecting cognate aminoacyl-transfer RNA (tRNA) molecules. The large subunit (LSU) contains the ribosomal catalytic site termed the peptidyl transferase center (PTC), which catalyzes the formation of peptide bonds, thereby polymerizing the amino acids delivered by tRNAs into a polypeptide chain. The nascent polypeptides leave the ribosome through a tunnel in the LSU and interact with protein factors that function in enzymatic processing, targeting, and the membrane insertion of nascent chains at the exit of the ribosomal tunnel. This Saccharomyces cerevisiae (strain ATCC 204508 / S288c) (Baker's yeast) protein is Small ribosomal subunit protein eS25B.